A 227-amino-acid polypeptide reads, in one-letter code: Phosphoribosylformylglycinamidine synthase subunit PurQ (227 aa).

One can recognise a Glutamine amidotransferase type-1 domain in the interval 3–225; that stretch reads FAVIVFPGSN…VKQGAHHVKT (223 aa). The active-site Nucleophile is the C86. Residues H194 and E196 contribute to the active site.

Part of the FGAM synthase complex composed of 1 PurL, 1 PurQ and 2 PurS subunits.

The protein resides in the cytoplasm. It catalyses the reaction N(2)-formyl-N(1)-(5-phospho-beta-D-ribosyl)glycinamide + L-glutamine + ATP + H2O = 2-formamido-N(1)-(5-O-phospho-beta-D-ribosyl)acetamidine + L-glutamate + ADP + phosphate + H(+). The catalysed reaction is L-glutamine + H2O = L-glutamate + NH4(+). Its pathway is purine metabolism; IMP biosynthesis via de novo pathway; 5-amino-1-(5-phospho-D-ribosyl)imidazole from N(2)-formyl-N(1)-(5-phospho-D-ribosyl)glycinamide: step 1/2. In terms of biological role, part of the phosphoribosylformylglycinamidine synthase complex involved in the purines biosynthetic pathway. Catalyzes the ATP-dependent conversion of formylglycinamide ribonucleotide (FGAR) and glutamine to yield formylglycinamidine ribonucleotide (FGAM) and glutamate. The FGAM synthase complex is composed of three subunits. PurQ produces an ammonia molecule by converting glutamine to glutamate. PurL transfers the ammonia molecule to FGAR to form FGAM in an ATP-dependent manner. PurS interacts with PurQ and PurL and is thought to assist in the transfer of the ammonia molecule from PurQ to PurL. The polypeptide is Phosphoribosylformylglycinamidine synthase subunit PurQ (Exiguobacterium sibiricum (strain DSM 17290 / CCUG 55495 / CIP 109462 / JCM 13490 / 255-15)).